Consider the following 720-residue polypeptide: Ornithine decarboxylase (720 aa).

Residue K354 is modified to N6-(pyridoxal phosphate)lysine.

This sequence belongs to the Orn/Lys/Arg decarboxylase class-I family. The cofactor is pyridoxal 5'-phosphate.

It catalyses the reaction L-ornithine + H(+) = putrescine + CO2. The protein is Ornithine decarboxylase (speF) of Haemophilus influenzae (strain ATCC 51907 / DSM 11121 / KW20 / Rd).